Reading from the N-terminus, the 260-residue chain is Triosephosphate isomerase (260 aa).

Residue 11 to 13 (NWK) coordinates substrate. The active-site Electrophile is His103. Glu175 functions as the Proton acceptor in the catalytic mechanism. Residues Gly181, Ser220, and 241-242 (GG) contribute to the substrate site.

Belongs to the triosephosphate isomerase family. In terms of assembly, homodimer.

It is found in the cytoplasm. The catalysed reaction is D-glyceraldehyde 3-phosphate = dihydroxyacetone phosphate. It participates in carbohydrate biosynthesis; gluconeogenesis. Its pathway is carbohydrate degradation; glycolysis; D-glyceraldehyde 3-phosphate from glycerone phosphate: step 1/1. Functionally, involved in the gluconeogenesis. Catalyzes stereospecifically the conversion of dihydroxyacetone phosphate (DHAP) to D-glyceraldehyde-3-phosphate (G3P). This chain is Triosephosphate isomerase, found in Shewanella denitrificans (strain OS217 / ATCC BAA-1090 / DSM 15013).